Consider the following 1005-residue polypeptide: Negative regulator of pleiotropic drug resistance STB5 (1005 aa).

The segment at 1–28 (MSGPDKGSDSGQTANDPKQKKARNGQME) is disordered. Positions 32–59 (CARCRKLKKKCPRQLPECSNCLKAREPC) form a DNA-binding region, zn(2)-C6 fungal-type. Disordered regions lie at residues 129–151 (GGEQ…SINR), 666–693 (KGKS…EDVK), and 763–831 (TKPT…SSLR). Residues 673-693 (KRFEKSKESDSDRGVTEEDVK) are compositionally biased toward basic and acidic residues. Polar residues predominate over residues 763–773 (TKPTANIMNDQ). Over residues 792 to 801 (EGPKSLKEGN) the composition is skewed to basic and acidic residues.

It is found in the nucleus. Transcription factor that negatively regulates pleiotropic drug resistance genes, including the ABC transporter genes CDR1, PDH1, and YOR1. The sequence is that of Negative regulator of pleiotropic drug resistance STB5 from Candida glabrata (strain ATCC 2001 / BCRC 20586 / JCM 3761 / NBRC 0622 / NRRL Y-65 / CBS 138) (Yeast).